We begin with the raw amino-acid sequence, 487 residues long: Cytochrome P450 2C16 (487 aa).

Position 432 (Cys-432) interacts with heme.

It belongs to the cytochrome P450 family. Heme is required as a cofactor. Expressed constitutively in liver, lung, testes, and kidney.

The protein localises to the endoplasmic reticulum membrane. Its subcellular location is the microsome membrane. It catalyses the reaction an organic molecule + reduced [NADPH--hemoprotein reductase] + O2 = an alcohol + oxidized [NADPH--hemoprotein reductase] + H2O + H(+). Its function is as follows. Cytochromes P450 are a group of heme-thiolate monooxygenases. In liver microsomes, this enzyme is involved in an NADPH-dependent electron transport pathway. It oxidizes a variety of structurally unrelated compounds, including steroids, fatty acids, and xenobiotics. This is Cytochrome P450 2C16 (CYP2C16) from Oryctolagus cuniculus (Rabbit).